Reading from the N-terminus, the 595-residue chain is Cyclin-dependent kinase-like 3 (595 aa).

The region spanning 4–286 (YETLGKVGEG…STDLLRHDYF (283 aa)) is the Protein kinase domain. Residues 10 to 18 (VGEGSYGTV) and K33 each bind ATP. The short motif at 45 to 51 (KIATREI) is the [NKR]KIAxRE element. D125 functions as the Proton acceptor in the catalytic mechanism. Position 158 is a phosphothreonine (T158). Phosphotyrosine is present on Y160. Disordered regions lie at residues 362–427 (VIKA…PHAG), 448–513 (SSNL…NKRK), and 551–586 (RESKKTDSSKIPTLLSMDPNQEKQEGGDGDCEGKNL). The span at 368-386 (GKGDVPDQKKPEYEGDHRQ) shows a compositional bias: basic and acidic residues. Residues 387–397 (QGTADDTQPSS) are compositionally biased toward polar residues. The segment covering 448–457 (SSNLSHPNSR) has biased composition (low complexity). Composition is skewed to polar residues over residues 468 to 491 (SSQTIGQTLSNSRQEDTGPTQVQT) and 499 to 509 (RTGQNDQISSG). Over residues 570–585 (NQEKQEGGDGDCEGKN) the composition is skewed to basic and acidic residues.

This sequence belongs to the protein kinase superfamily. CMGC Ser/Thr protein kinase family. CDC2/CDKX subfamily.

The protein localises to the cytoplasm. It carries out the reaction L-seryl-[protein] + ATP = O-phospho-L-seryl-[protein] + ADP + H(+). The enzyme catalyses L-threonyl-[protein] + ATP = O-phospho-L-threonyl-[protein] + ADP + H(+). The chain is Cyclin-dependent kinase-like 3 from Mus musculus (Mouse).